The primary structure comprises 96 residues: Large ribosomal subunit protein bL27 (96 aa).

The propeptide occupies 1–9 (MLRLDLQFF). A disordered region spans residues 14–36 (GVGSTKNGRDSQSKRLGAKRADG).

It belongs to the bacterial ribosomal protein bL27 family. The N-terminus is cleaved by ribosomal processing cysteine protease Prp.

This is Large ribosomal subunit protein bL27 from Bacillus anthracis (strain A0248).